A 474-amino-acid chain; its full sequence is TOM1-like protein 1 (474 aa).

The region spanning 22 to 154 is the VHS domain; the sequence is ATFAGVLTED…DLLKKGVQFP (133 aa). The segment at 153–180 is disordered; sequence FPPSDGEPETRQEAGQISPNRPTSVPTA. The span at 165-178 shows a compositional bias: polar residues; that stretch reads EAGQISPNRPTSVP. At Ser170 the chain carries Phosphoserine. A GAT domain is found at 199-287; that stretch reads EQIGKLHSEL…AVLGYERFTR (89 aa). A disordered region spans residues 291 to 317; the sequence is RLLEQKRNRTEATRTSSEPSAPSCDLL. Positions 293-302 are enriched in basic and acidic residues; it reads LEQKRNRTEA. Ser313 and Ser320 each carry phosphoserine. An interaction with GRB2 region spans residues 392-395; that stretch reads YDNF. An SH3-binding motif is present at residues 420–424; that stretch reads LPPLP. The interaction with PIK3R1 stretch occupies residues 441–444; it reads YEVM. Residue Tyr457 is modified to Phosphotyrosine. The short motif at 457-460 is the SH2-binding element; it reads YEEI.

Belongs to the TOM1 family. As to quaternary structure, interacts with LYN. Interacts with the SH2 and SH3 domains of FYN when phosphorylated. Also interacts with GRB2 and PIK3R1 when phosphorylated. Post-translationally, phosphorylated on tyrosines by LYN. Phosphorylated on tyrosines by FYN. As to expression, strongly expressed in brain and kidney, expressed at intermediate levels skin and heart, and weakly expressed in thymus. Not expressed in liver and spleen.

The protein resides in the golgi apparatus. It is found in the golgi stack. Its subcellular location is the endosome membrane. It localises to the cytoplasm. The protein localises to the membrane. Its function is as follows. Probable adapter protein involved in signaling pathways. Interacts with the SH2 and SH3 domains of various signaling proteins when it is phosphorylated. May promote FYN activation, possibly by disrupting intramolecular SH3-dependent interactions. The protein is TOM1-like protein 1 (Tom1l1) of Mus musculus (Mouse).